We begin with the raw amino-acid sequence, 1372 residues long: DNA-directed RNA polymerase subunit beta (1372 aa).

Belongs to the RNA polymerase beta chain family. As to quaternary structure, the RNAP catalytic core consists of 2 alpha, 1 beta, 1 beta' and 1 omega subunit. When a sigma factor is associated with the core the holoenzyme is formed, which can initiate transcription.

It carries out the reaction RNA(n) + a ribonucleoside 5'-triphosphate = RNA(n+1) + diphosphate. Functionally, DNA-dependent RNA polymerase catalyzes the transcription of DNA into RNA using the four ribonucleoside triphosphates as substrates. The protein is DNA-directed RNA polymerase subunit beta of Nitratidesulfovibrio vulgaris (strain DSM 19637 / Miyazaki F) (Desulfovibrio vulgaris).